Reading from the N-terminus, the 260-residue chain is MEKFIDLLEFGSAEQKRKMGRPSKIPPFSHYDAYRRSDIDFFISLFSGREELYSPCKKNSDFRQKAFYIIEKKCGHFLAMRKGRNAEKLWLYLFNDFEKMIRNGGDKNDEKSKSIVPFYDCLQFLIPYLEKTDSLSKLTLTTCNAEADDQQVKAKKPKIEHELSEDKLNDDWLQKVIDTVTCQQSTSCTSIQLNSSAPSTCSAKTPNSTANLPTSEKHADIIAYVTNFLEDVPNDKLMLHKVRLFQFIEEEKSRLKEESK.

This is an uncharacterized protein from Caenorhabditis elegans.